A 244-amino-acid polypeptide reads, in one-letter code: Trypsin (244 aa).

An N-terminal signal peptide occupies residues 1–15 (MKFLVILVLLGAAVA). Residues 16 to 21 (FEDDDK) constitute a propeptide, activation peptide. The Peptidase S1 domain maps to 22 to 242 (IVGGFTCAKN…FVTWIQSTIS (221 aa)). 6 cysteine pairs are disulfide-bonded: cysteine 28/cysteine 158, cysteine 46/cysteine 62, cysteine 130/cysteine 231, cysteine 137/cysteine 204, cysteine 169/cysteine 183, and cysteine 194/cysteine 218. Histidine 61 acts as the Charge relay system in catalysis. Ca(2+) is bound by residues glutamate 73, asparagine 75, and glutamate 83. Aspartate 105 (charge relay system) is an active-site residue. Residue serine 198 is the Charge relay system of the active site.

The protein belongs to the peptidase S1 family. Requires Ca(2+) as cofactor.

It is found in the secreted. It localises to the extracellular space. The catalysed reaction is Preferential cleavage: Arg-|-Xaa, Lys-|-Xaa.. This Xenopus laevis (African clawed frog) protein is Trypsin.